The sequence spans 362 residues: Mitochondrial glycine transporter (362 aa).

Solcar repeat units lie at residues 22-108 (PDAT…MRTS), 132-236 (LTAM…FKND), and 269-354 (RSSI…LIKS). The next 6 membrane-spanning stretches (helical) occupy residues 28–53 (LLAGAIAGLVSAVTLQPFDLLKTRLQ), 83–109 (GTLPSTLRTSIGAGLYFTTLSKMRTSW), 138–163 (LTTGFIARGIVGYITMPITIIKTRFE), 211–234 (GSVATLARDCPYAGLYVLTYEAFK), 273–299 (INSTAAVLAASTCTTITAPFDAIKTRL), and 329–347 (GLSLRLGRKGISAGISWCI).

It belongs to the mitochondrial carrier (TC 2.A.29) family. SLC25A38 subfamily.

Its subcellular location is the mitochondrion inner membrane. It catalyses the reaction glycine(in) = glycine(out). Mitochondrial glycine transporter that imports glycine into the mitochondrial matrix. Plays an important role in providing glycine for the first enzymatic step in heme biosynthesis, the condensation of glycine with succinyl-CoA to produce 5-aminolevulinate (ALA) in the mitochondrial matrix. The polypeptide is Mitochondrial glycine transporter (Candida albicans (strain SC5314 / ATCC MYA-2876) (Yeast)).